The sequence spans 510 residues: GMP synthase [glutamine-hydrolyzing] (510 aa).

The Glutamine amidotransferase type-1 domain occupies 5–195; it reads LVFIIDFGGQ…LFNICELKGD (191 aa). Cys82 (nucleophile) is an active-site residue. Active-site residues include His169 and Glu171. The GMPS ATP-PPase domain maps to 196 to 385; sequence WSVTSFAEEK…LGIPHKLVWR (190 aa). 223–229 provides a ligand contact to ATP; the sequence is SGGVDSS.

In terms of assembly, homodimer.

It catalyses the reaction XMP + L-glutamine + ATP + H2O = GMP + L-glutamate + AMP + diphosphate + 2 H(+). It functions in the pathway purine metabolism; GMP biosynthesis; GMP from XMP (L-Gln route): step 1/1. Catalyzes the synthesis of GMP from XMP. The sequence is that of GMP synthase [glutamine-hydrolyzing] from Clostridium tetani (strain Massachusetts / E88).